We begin with the raw amino-acid sequence, 221 residues long: Hydrogenase expression/formation protein HupD (221 aa).

Positions 20, 66, and 97 each coordinate Ni(2+).

The protein belongs to the peptidase A31 family.

Not known. Could be involved in the processing of hydrogenase. In Thiocapsa roseopersicina, this protein is Hydrogenase expression/formation protein HupD (hupD).